The sequence spans 355 residues: MSLFDTINAGGAELLGFAWPTVWAVVRILVVSVVILLCVAYLILWERKLIGWMHVRLGPNRVGPGGLLQPIADVLKLLLKEVIQPSAASRWLYLIAPVMTVVPAFAVWAVIPFQAEAVLANVNAGLLYAMAISSIGVYAVILAGWASNSKYAFLGAMRAAAQMVSYEISMGFALVLVLMTAGSLNLSEIVGSQQHGFFAGHGVNFLSWNWLPLLPAFVVYFISGIAETNRHPFDVVEGESEIVAGHMIDYSGMAFALFFLAEYINMIVISALAATLFLGGWDAPFEFLSFIPGIFWLVLKVFALLSVFIWVRATFPRYRYDQIMRLGWKVFLPVTVVWVIVVGFWMMSPLNIWVK.

8 helical membrane-spanning segments follow: residues Val-25–Trp-45, Trp-91–Ile-111, Leu-126–Ala-146, Met-170–Val-190, Phe-205–Ile-225, Met-253–Ala-273, Phe-290–Trp-310, and Val-330–Leu-350.

This sequence belongs to the complex I subunit 1 family. NDH-1 is composed of 14 different subunits. Subunits NuoA, H, J, K, L, M, N constitute the membrane sector of the complex.

It is found in the cell inner membrane. It carries out the reaction a quinone + NADH + 5 H(+)(in) = a quinol + NAD(+) + 4 H(+)(out). Functionally, NDH-1 shuttles electrons from NADH, via FMN and iron-sulfur (Fe-S) centers, to quinones in the respiratory chain. The immediate electron acceptor for the enzyme in this species is believed to be ubiquinone. Couples the redox reaction to proton translocation (for every two electrons transferred, four hydrogen ions are translocated across the cytoplasmic membrane), and thus conserves the redox energy in a proton gradient. This subunit may bind ubiquinone. The sequence is that of NADH-quinone oxidoreductase subunit H from Burkholderia cenocepacia (strain HI2424).